Here is a 252-residue protein sequence, read N- to C-terminus: 2-succinyl-6-hydroxy-2,4-cyclohexadiene-1-carboxylate synthase (252 aa).

Belongs to the AB hydrolase superfamily. MenH family. Monomer.

The enzyme catalyses 5-enolpyruvoyl-6-hydroxy-2-succinyl-cyclohex-3-ene-1-carboxylate = (1R,6R)-6-hydroxy-2-succinyl-cyclohexa-2,4-diene-1-carboxylate + pyruvate. Its pathway is quinol/quinone metabolism; 1,4-dihydroxy-2-naphthoate biosynthesis; 1,4-dihydroxy-2-naphthoate from chorismate: step 3/7. It participates in quinol/quinone metabolism; menaquinone biosynthesis. In terms of biological role, catalyzes a proton abstraction reaction that results in 2,5-elimination of pyruvate from 2-succinyl-5-enolpyruvyl-6-hydroxy-3-cyclohexene-1-carboxylate (SEPHCHC) and the formation of 2-succinyl-6-hydroxy-2,4-cyclohexadiene-1-carboxylate (SHCHC). In Shigella boydii serotype 4 (strain Sb227), this protein is 2-succinyl-6-hydroxy-2,4-cyclohexadiene-1-carboxylate synthase.